We begin with the raw amino-acid sequence, 479 residues long: Adenylate kinase 8 (479 aa).

2 adenylate kinase regions span residues 58–258 (PRVV…TYVQ) and 269–471 (PKVL…SGII). 67–72 (ASGKTT) serves as a coordination point for ATP. Residues 87 to 113 (TKENLLEREFSLLSLEAKKHYQVYKRV) are NMP 1. AMP is bound by residues 140 to 143 (GIPE), Gln147, and Arg203. An LID 1 region spans residues 177–206 (GKRIDPVTGEIYHTTFDWPPELEIQNRLIQ). 278 to 283 (GCGKKL) serves as a coordination point for ATP. The interval 298-327 (SCGQLLKEAMAAESSLGDLIEPFFEKRMTV) is NMP 2. AMP is bound by residues 325-327 (MTV), 354-357 (GFPR), and Gln361. The tract at residues 391-424 (LRRTDPVTGERFHLMYKPPPTIEVQARLLQNPKD) is LID 2. Arg392 contributes to the ATP binding site.

The protein belongs to the adenylate kinase family. As to quaternary structure, interacts with CFAP45 and CFAP52; CFAP45 and AK8 dimerization may create a cavity at the interface of the dimer that can accommodate AMP.

The protein resides in the cytoplasm. Its subcellular location is the cytosol. It localises to the cytoskeleton. The protein localises to the cilium axoneme. It carries out the reaction AMP + ATP = 2 ADP. It catalyses the reaction a 2'-deoxyribonucleoside 5'-diphosphate + ATP = a 2'-deoxyribonucleoside 5'-triphosphate + ADP. The enzyme catalyses a ribonucleoside 5'-diphosphate + ATP = a ribonucleoside 5'-triphosphate + ADP. Nucleoside monophosphate (NMP) kinase that catalyzes the reversible transfer of the terminal phosphate group between nucleoside triphosphates and monophosphates. Has highest activity toward AMP, and weaker activity toward dAMP, CMP and dCMP. Also displays broad nucleoside diphosphate kinase activity. The sequence is that of Adenylate kinase 8 (Ak8) from Rattus norvegicus (Rat).